Reading from the N-terminus, the 48-residue chain is uncharacterized protein (48 aa).

A helical membrane pass occupies residues 6–26 (IILLMIVCLVVSVLVVVWIIL).

It is found in the host membrane. This is an uncharacterized protein from Spiroplasma melliferum (SpV4).